The sequence spans 518 residues: NADH-quinone oxidoreductase subunit N (518 aa).

14 helical membrane-spanning segments follow: residues phenylalanine 18–phenylalanine 38, valine 45–isoleucine 65, alanine 82–alanine 102, isoleucine 113–alanine 133, leucine 136–phenylalanine 156, valine 171–leucine 191, valine 220–valine 240, proline 254–isoleucine 274, leucine 295–glycine 315, leucine 328–serine 348, valine 355–leucine 375, alanine 399–valine 419, tryptophan 439–valine 459, and valine 486–valine 506.

Belongs to the complex I subunit 2 family. As to quaternary structure, NDH-1 is composed of 14 different subunits. Subunits NuoA, H, J, K, L, M, N constitute the membrane sector of the complex.

The protein resides in the cell inner membrane. It catalyses the reaction a quinone + NADH + 5 H(+)(in) = a quinol + NAD(+) + 4 H(+)(out). NDH-1 shuttles electrons from NADH, via FMN and iron-sulfur (Fe-S) centers, to quinones in the respiratory chain. The immediate electron acceptor for the enzyme in this species is believed to be ubiquinone. Couples the redox reaction to proton translocation (for every two electrons transferred, four hydrogen ions are translocated across the cytoplasmic membrane), and thus conserves the redox energy in a proton gradient. In Anaeromyxobacter sp. (strain Fw109-5), this protein is NADH-quinone oxidoreductase subunit N.